The primary structure comprises 108 residues: ATPase inhibitor, mitochondrial (108 aa).

The transit peptide at 1-25 directs the protein to the mitochondrion; it reads MAATALAVRSRIGAWSVWAMQSRGF. Positions 25–48 are disordered; the sequence is FSSDTPEGVRSGAGAVRDAGGAFG. Positions 26-52 are N-terminal inhibitory region; that stretch reads SSDTPEGVRSGAGAVRDAGGAFGKKEQ. Residues 69–108 are a coiled coil; that stretch reads ALKKHHENEISHHVKEIERLQKEIERHKQSIKKLKNDDDD. Positions 74–106 are antiparallel alpha-helical coiled coil region; sequence HENEISHHVKEIERLQKEIERHKQSIKKLKNDD. Residue K103 is modified to N6-succinyllysine.

It belongs to the ATPase inhibitor family. Homodimer; represents the active form and is present at a pH value below 6.5. Homotetramer; represents the inactive form and is present at a pH value above 7.0.

Its subcellular location is the mitochondrion. Functionally, endogenous F(1)F(o)-ATPase inhibitor limiting ATP depletion when the mitochondrial membrane potential falls below a threshold and the F(1)F(o)-ATP synthase starts hydrolyzing ATP to pump protons out of the mitochondrial matrix. Required to avoid the consumption of cellular ATP when the F(1)F(o)-ATP synthase enzyme acts as an ATP hydrolase. Indirectly acts as a regulator of heme synthesis in erythroid tissues: regulates heme synthesis by modulating the mitochondrial pH and redox potential, allowing FECH to efficiently catalyze the incorporation of iron into protoporphyrin IX to produce heme. The protein is ATPase inhibitor, mitochondrial of Sus scrofa (Pig).